The following is a 236-amino-acid chain: Small ribosomal subunit protein uS3 (236 aa).

The region spanning 39-107 (IRSYVLEELR…ETSLNIVEIR (69 aa)) is the KH type-2 domain. The segment at 214 to 236 (ASERRATEADQSGSSSNRRRENA) is disordered.

Belongs to the universal ribosomal protein uS3 family. Part of the 30S ribosomal subunit. Forms a tight complex with proteins S10 and S14.

In terms of biological role, binds the lower part of the 30S subunit head. Binds mRNA in the 70S ribosome, positioning it for translation. This chain is Small ribosomal subunit protein uS3, found in Bartonella tribocorum (strain CIP 105476 / IBS 506).